Reading from the N-terminus, the 1600-residue chain is A disintegrin and metalloproteinase with thrombospondin motifs 12 (1600 aa).

Positions 1–25 (MPCARGSWLAKLSIVAQLINFGAFC) are cleaved as a signal peptide. Positions 26-244 (HGRQTQPWPV…TLRSRSLSRR (219 aa)) are excised as a propeptide. Asparagine 105 carries N-linked (GlcNAc...) asparagine glycosylation. Positions 210-217 (PICGLKDS) match the Cysteine switch motif. Zn(2+) is bound at residue cysteine 212. The region spanning 250-460 (RWVETLVVAD…GRGFCLDDIP (211 aa)) is the Peptidase M12B domain. Cystine bridges form between cysteine 326-cysteine 380, cysteine 355-cysteine 362, cysteine 374-cysteine 455, cysteine 413-cysteine 439, cysteine 482-cysteine 505, cysteine 493-cysteine 511, cysteine 500-cysteine 530, cysteine 524-cysteine 535, cysteine 558-cysteine 595, cysteine 562-cysteine 600, and cysteine 573-cysteine 585. Histidine 396 lines the Zn(2+) pocket. Glutamate 397 is an active-site residue. Zn(2+) contacts are provided by histidine 400 and histidine 406. Positions 469–548 (VIAPGVIYDV…GKKPESIPGG (80 aa)) constitute a Disintegrin domain. 4 TSP type-1 domains span residues 546–601 (PGGW…HPCR), 827–887 (KLLY…KDCP), 891–947 (WAGE…RDIL), and 948–1001 (CPSD…QQCP). The segment at 705–831 (CQTVKKLFRQ…DNDVEKLLYF (127 aa)) is spacer 1. The tract at residues 1001 to 1321 (PFSRRVLKPN…HLMKDHSPAY (321 aa)) is spacer 2. 2 disordered regions span residues 1006–1140 (VLKP…LSSS) and 1158–1179 (PEVEIHSGSGEDSDQPLNKDKS). Over residues 1038-1047 (PTPLSTPTVP) the composition is skewed to low complexity. Positions 1048-1107 (ESMSTSTPTINSLGSTIASQEDANGMGWQNNSTQAEEGSHFPTSSGSTSQVPVTSWSLSI) are enriched in polar residues. Residues 1130–1140 (TTTSDSGLSSS) are compositionally biased toward low complexity. 4 consecutive TSP type-1 domains span residues 1318–1371 (SPAY…RPCA), 1373–1428 (WRVG…CNLE), 1429–1477 (PCGE…NRHL), and 1478–1538 (CCHW…QACR). The PLAC domain maps to 1541–1581 (ADLTCLKDRLSISFCQTLKSMRKCSVPSVRAQCCLSCPQAP).

As to quaternary structure, interacts with COMP. Requires Zn(2+) as cofactor. In terms of processing, the precursor is cleaved by a furin endopeptidase. Post-translationally, subjected to an intracellular maturation process yielding a 120 kDa N-terminal fragment containing the metalloproteinase, disintegrin, one TSP type-1 and the Cys-rich domains and a 83 kDa C-terminal fragment containing the spacer 2 and four TSP type-1 domains. Glycosylated. Can be O-fucosylated by POFUT2 on a serine or a threonine residue found within the consensus sequence C1-X(2)-(S/T)-C2-G of the TSP type-1 repeat domains where C1 and C2 are the first and second cysteine residue of the repeat, respectively. Fucosylated repeats can then be further glycosylated by the addition of a beta-1,3-glucose residue by the glucosyltransferase, B3GALTL. Fucosylation mediates the efficient secretion of ADAMTS family members. Can also be C-glycosylated with one or two mannose molecules on tryptophan residues within the consensus sequence W-X-X-W of the TPRs, and N-glycosylated. These other glycosylations can also facilitate secretion.

The protein resides in the secreted. It is found in the extracellular space. Its subcellular location is the extracellular matrix. Inhibited by alpha-2 macroglobulin. Its function is as follows. Metalloprotease that plays a role in the degradation of COMP. Also cleaves alpha-2 macroglobulin and aggregan. Has anti-tumorigenic properties. The sequence is that of A disintegrin and metalloproteinase with thrombospondin motifs 12 (Adamts12) from Mus musculus (Mouse).